A 373-amino-acid polypeptide reads, in one-letter code: G protein-coupled receptor 137Ba (373 aa).

Over 1–15 (MQKDSLPTLSPAVPP) the chain is Lumenal. A helical membrane pass occupies residues 16–36 (YVMLGLTVAYTIFYCLLFVFV). Residues 37–55 (YVQLWLVLRYRHKRFSYQT) are Cytoplasmic-facing. The helical transmembrane segment at 56–76 (VFLFLCLLWAALRALLFSFYF) threads the bilayer. Over 77–84 (KNCVTANT) the chain is Lumenal. The chain crosses the membrane as a helical span at residues 85–105 (LGPFCFWLLYCFPVCLQFFTL). Residues 106–135 (SLMNLYFAQVIFKAKSKYSPELQKYRLPLY) lie on the Cytoplasmic side of the membrane. Residues 136 to 156 (LLFLSISLLFLLVNLTCALLV) traverse the membrane as a helical segment. The Lumenal portion of the chain corresponds to 157-176 (KINRANTETVVLVRVTVNDS). A helical transmembrane segment spans residues 177 to 197 (LFVLCAVSLSLCLYRIAKMSL). The Cytoplasmic segment spans residues 198-213 (ANIYLEAKGTSVCQVT). A helical membrane pass occupies residues 214–234 (LIGVTVVLLYSSRACYNLVVL). At 235 to 268 (ALTKIKSINSFDYDWYNVSDQADLKSTLGDAGYV) the chain is on the lumenal side. A helical membrane pass occupies residues 269-289 (VFGVILFVWELLPTSLVVYFF). The Cytoplasmic segment spans residues 290–373 (RVRKPTLDRS…HLAPEELNPY (84 aa)).

Belongs to the GPR137 family.

It is found in the lysosome membrane. Lysosomal integral membrane protein that regulates the localization and activity of mTORC1, a signaling complex promoting cell growth in response to growth factors, energy levels, and amino acids. Interacts with Rag GTPases and increases the lysosomial localization and activity of Rag GTPases and thereby regulates mTORC1 translocation and activity in lysosome. Also acts as a negative regulator of osteoclast activity. May be involved in interleukin-4-induced M2 macrophage polarization. Functionally, also acts as a negative regulator of osteoclast activity. May be involved in interleukin-4-induced M2 macrophage polarization. This chain is G protein-coupled receptor 137Ba, found in Danio rerio (Zebrafish).